Reading from the N-terminus, the 346-residue chain is GTPase Obg (346 aa).

Positions 1–159 (MKFLDEAKVY…RWIWLRLKLI (159 aa)) constitute an Obg domain. The region spanning 160-327 (ADAGLVGLPN…ALRALVAVIG (168 aa)) is the OBG-type G domain. GTP contacts are provided by residues 166-173 (GLPNAGKS), 191-195 (FTTLH), 212-215 (DIPG), 279-282 (NKID), and 308-310 (SAA). Serine 173 and threonine 193 together coordinate Mg(2+).

It belongs to the TRAFAC class OBG-HflX-like GTPase superfamily. OBG GTPase family. In terms of assembly, monomer. The cofactor is Mg(2+).

It localises to the cytoplasm. In terms of biological role, an essential GTPase which binds GTP, GDP and possibly (p)ppGpp with moderate affinity, with high nucleotide exchange rates and a fairly low GTP hydrolysis rate. Plays a role in control of the cell cycle, stress response, ribosome biogenesis and in those bacteria that undergo differentiation, in morphogenesis control. The chain is GTPase Obg from Bradyrhizobium diazoefficiens (strain JCM 10833 / BCRC 13528 / IAM 13628 / NBRC 14792 / USDA 110).